Reading from the N-terminus, the 572-residue chain is Solute carrier family 22 member 16 (572 aa).

The helical transmembrane segment at 21-41 threads the bilayer; the sequence is IFLYFICAFQNISCGIHYLAS. Asparagine 57 is a glycosylation site (N-linked (GlcNAc...) asparagine). The next 5 helical transmembrane spans lie at 156-176, 183-203, 208-228, 244-264, and 268-288; these read LIQP…GYLS, LVLW…AFTF, FIVA…VVFV, IHLH…GYFV, and WIYQ…CWML. Asparagine 315 carries N-linked (GlcNAc...) asparagine glycosylation. A run of 6 helical transmembrane segments spans residues 359–379, 389–409, 416–436, 441–461, 476–496, and 503–523; these read TLIL…FSLN, LNLF…CLGM, NILI…MVIP, VWLV…FGLI, LAVG…PLCI, and IFMP…LTFL. Asparagine 559 carries an N-linked (GlcNAc...) asparagine glycan.

This sequence belongs to the major facilitator (TC 2.A.1) superfamily. Organic cation transporter (TC 2.A.1.19) family.

The protein localises to the cell membrane. The enzyme catalyses (R)-carnitine(in) = (R)-carnitine(out). It catalyses the reaction spermidine(in) = spermidine(out). Functionally, facilitative organic cation transporter that mediates the transport of carnitine as well as the polyamine spermidine. Mediates the partially Na(+)-dependent bidirectional transport of carnitine. May mediate L-carnitine secretion from testis epididymal epithelium into the lumen which is involved in the maturation of spermatozoa. The sequence is that of Solute carrier family 22 member 16 (SLC22A16) from Bos taurus (Bovine).